A 327-amino-acid chain; its full sequence is Serine/threonine-protein phosphatase alpha-1 isoform (327 aa).

Mn(2+) is bound by residues Asp62, His64, Asp90, and Asn122. His123 functions as the Proton donor in the catalytic mechanism. Mn(2+) is bound by residues His171 and His246. A disordered region spans residues 308–327; sequence GSSGRPLTPPRGANNKNKKK. Thr315 is subject to Phosphothreonine.

It belongs to the PPP phosphatase family. PP-1 subfamily. As to quaternary structure, interacts with Nop17l. Mn(2+) is required as a cofactor.

It catalyses the reaction O-phospho-L-seryl-[protein] + H2O = L-seryl-[protein] + phosphate. The enzyme catalyses O-phospho-L-threonyl-[protein] + H2O = L-threonyl-[protein] + phosphate. This is Serine/threonine-protein phosphatase alpha-1 isoform (Pp1alpha-96A) from Drosophila melanogaster (Fruit fly).